The sequence spans 340 residues: Ketol-acid reductoisomerase (NADP(+)) (340 aa).

Positions 3 to 183 (VSIYYDKDCD…GGGRTGIIET (181 aa)) constitute a KARI N-terminal Rossmann domain. NADP(+) is bound by residues 26-29 (FGSQ), Lys49, Ser54, and 84-87 (DEIQ). His109 is a catalytic residue. Gly135 is a binding site for NADP(+). The 146-residue stretch at 184–329 (TFKAETETDL…RELRAMMPWI (146 aa)) folds into the KARI C-terminal knotted domain. The Mg(2+) site is built by Asp192, Glu196, Glu228, and Glu232. Ser253 is a substrate binding site.

This sequence belongs to the ketol-acid reductoisomerase family. Requires Mg(2+) as cofactor.

It carries out the reaction (2R)-2,3-dihydroxy-3-methylbutanoate + NADP(+) = (2S)-2-acetolactate + NADPH + H(+). It catalyses the reaction (2R,3R)-2,3-dihydroxy-3-methylpentanoate + NADP(+) = (S)-2-ethyl-2-hydroxy-3-oxobutanoate + NADPH + H(+). It functions in the pathway amino-acid biosynthesis; L-isoleucine biosynthesis; L-isoleucine from 2-oxobutanoate: step 2/4. The protein operates within amino-acid biosynthesis; L-valine biosynthesis; L-valine from pyruvate: step 2/4. In terms of biological role, involved in the biosynthesis of branched-chain amino acids (BCAA). Catalyzes an alkyl-migration followed by a ketol-acid reduction of (S)-2-acetolactate (S2AL) to yield (R)-2,3-dihydroxy-isovalerate. In the isomerase reaction, S2AL is rearranged via a Mg-dependent methyl migration to produce 3-hydroxy-3-methyl-2-ketobutyrate (HMKB). In the reductase reaction, this 2-ketoacid undergoes a metal-dependent reduction by NADPH to yield (R)-2,3-dihydroxy-isovalerate. The sequence is that of Ketol-acid reductoisomerase (NADP(+)) from Campylobacter lari (strain RM2100 / D67 / ATCC BAA-1060).